Here is an 899-residue protein sequence, read N- to C-terminus: Nuclear factor NF-kappa-B p100 subunit (899 aa).

A phosphoserine mark is found at serine 23 and serine 161. The RHD domain occupies 35–224 (ADGPYLVIVE…QPIHDSKSPG (190 aa)). A Nuclear localization signal motif is present at residues 337 to 341 (RKRRK). Residues 346–377 (FSQPFGGGSHMGGGSGGSAGGYGGAGGGGSLG) form a GRR region. Residues 403–434 (GGAQMAGSRRDTDAGEGAEEPRTPPEAPQGEP) are disordered. Residues 410-425 (SRRDTDAGEGAEEPRT) show a composition bias toward basic and acidic residues. Threonine 425 bears the Phosphothreonine mark. ANK repeat units follow at residues 487–516 (NGDTPLHLAIIHGQTGVIEQIAHVIYHAQY), 526–555 (LHQTPLHLAVITGQTRVVSFLLQVGADPTL), 559–590 (HGDSALHLALRAGAAAPELLQALLRSGAHAVP), 599–628 (EGLYPVHLAVHARSPECLDLLVDCGAEVEA), 633–663 (GGRTALHLATEMEELGLVTHLVTKLHANVNA), and 667–696 (AGNTPLHLAAGLGSPTLTRLLLKAGADIHA). A disordered region spans residues 698–734 (NEEPLCPLPSPSTSGSDSDSEGPERDTQRNFRGHTPL). 3 positions are modified to phosphoserine: serine 713, serine 715, and serine 717. Residues 729 to 755 (RGHTPLDLTCSTKVKTLLLNAAQNTTE) form an ANK 7 repeat. Residues 764–851 (AGPGLSLGDA…EGVRLLKGPE (88 aa)) form the Death domain. Serine 812 carries the phosphoserine modification. The segment covering 851–865 (ETRDKLPSTEVKEDS) has biased composition (basic and acidic residues). Positions 851-899 (ETRDKLPSTEVKEDSAYGSQSVEQEAEKLCPPPEPPGGLCHGHPQPQVH) are disordered. Residue lysine 855 forms a Glycyl lysine isopeptide (Lys-Gly) (interchain with G-Cter in ubiquitin) linkage. A phosphoserine; by MAP3K14 mark is found at serine 865 and serine 869. Residues 887–899 (GGLCHGHPQPQVH) are compositionally biased toward low complexity.

As to quaternary structure, component of the NF-kappa-B RelB-p52 complex. Homodimer; component of the NF-kappa-B p52-p52 complex. Component of the NF-kappa-B p65-p52 complex. Component of the NF-kappa-B p52-c-Rel complex. NFKB2/p52 interacts with NFKBIE. Component of a complex consisting of the NF-kappa-B p50-p50 homodimer and BCL3. Directly interacts with MEN1. While translation occurs, the particular unfolded structure after the GRR repeat promotes the generation of p52 making it an acceptable substrate for the proteasome. This process is known as cotranslational processing. The processed form is active and the unprocessed form acts as an inhibitor (I kappa B-like), being able to form cytosolic complexes with NF-kappa B, trapping it in the cytoplasm. Complete folding of the region downstream of the GRR repeat precludes processing. In terms of processing, subsequent to MAP3K14-dependent serine phosphorylation, p100 polyubiquitination occurs then triggering its proteasome-dependent processing. Post-translationally, constitutive processing is tightly suppressed by its C-terminal processing inhibitory domain, named PID, which contains the death domain. Ubiquitinated by TRIM55; leading to processing by VCP and subsequent ubiquitin-dependent protein degradation by the proteasome. Highly expressed in lymph nodes and thymus.

The protein localises to the nucleus. Its subcellular location is the cytoplasm. Its function is as follows. NF-kappa-B is a pleiotropic transcription factor present in almost all cell types and is the endpoint of a series of signal transduction events that are initiated by a vast array of stimuli related to many biological processes such as inflammation, immunity, differentiation, cell growth, tumorigenesis and apoptosis. NF-kappa-B is a homo- or heterodimeric complex formed by the Rel-like domain-containing proteins RELA/p65, RELB, NFKB1/p105, NFKB1/p50, REL and NFKB2/p52. The dimers bind at kappa-B sites in the DNA of their target genes and the individual dimers have distinct preferences for different kappa-B sites that they can bind with distinguishable affinity and specificity. Different dimer combinations act as transcriptional activators or repressors, respectively. NF-kappa-B is controlled by various mechanisms of post-translational modification and subcellular compartmentalization as well as by interactions with other cofactors or corepressors. NF-kappa-B complexes are held in the cytoplasm in an inactive state complexed with members of the NF-kappa-B inhibitor (I-kappa-B) family. In a conventional activation pathway, I-kappa-B is phosphorylated by I-kappa-B kinases (IKKs) in response to different activators, subsequently degraded thus liberating the active NF-kappa-B complex which translocates to the nucleus. In a non-canonical activation pathway, the MAP3K14-activated CHUK/IKKA homodimer phosphorylates NFKB2/p100 associated with RelB, inducing its proteolytic processing to NFKB2/p52 and the formation of NF-kappa-B RelB-p52 complexes. The NF-kappa-B heterodimeric RelB-p52 complex is a transcriptional activator. The NF-kappa-B p52-p52 homodimer is a transcriptional repressor. NFKB2 appears to have dual functions such as cytoplasmic retention of attached NF-kappa-B proteins by p100 and generation of p52 by a cotranslational processing. The proteasome-mediated process ensures the production of both p52 and p100 and preserves their independent function. p52 binds to the kappa-B consensus sequence 5'-GGRNNYYCC-3', located in the enhancer region of genes involved in immune response and acute phase reactions. p52 and p100 are respectively the minor and major form; the processing of p100 being relatively poor. Isoform p49 is a subunit of the NF-kappa-B protein complex, which stimulates the HIV enhancer in synergy with p65. In concert with RELB, regulates the circadian clock by repressing the transcriptional activator activity of the CLOCK-BMAL1 heterodimer. In Mus musculus (Mouse), this protein is Nuclear factor NF-kappa-B p100 subunit (Nfkb2).